The primary structure comprises 431 residues: UDP-N-acetylmuramoylalanine--D-glutamate ligase (431 aa).

Gly111–Thr117 is a binding site for ATP.

It belongs to the MurCDEF family.

It is found in the cytoplasm. It carries out the reaction UDP-N-acetyl-alpha-D-muramoyl-L-alanine + D-glutamate + ATP = UDP-N-acetyl-alpha-D-muramoyl-L-alanyl-D-glutamate + ADP + phosphate + H(+). It participates in cell wall biogenesis; peptidoglycan biosynthesis. Its function is as follows. Cell wall formation. Catalyzes the addition of glutamate to the nucleotide precursor UDP-N-acetylmuramoyl-L-alanine (UMA). This chain is UDP-N-acetylmuramoylalanine--D-glutamate ligase, found in Petrotoga mobilis (strain DSM 10674 / SJ95).